The sequence spans 127 residues: Small ribosomal subunit protein uS11 (127 aa).

This sequence belongs to the universal ribosomal protein uS11 family. Part of the 30S ribosomal subunit. Interacts with proteins S7 and S18. Binds to IF-3.

Its function is as follows. Located on the platform of the 30S subunit, it bridges several disparate RNA helices of the 16S rRNA. Forms part of the Shine-Dalgarno cleft in the 70S ribosome. In Lactococcus lactis subsp. lactis (strain IL1403) (Streptococcus lactis), this protein is Small ribosomal subunit protein uS11.